We begin with the raw amino-acid sequence, 854 residues long: Valine--tRNA ligase (854 aa).

The 'HIGH' region signature appears at 46–56; that stretch reads PTVSGDLHIGH. The short motif at 551–555 is the 'KMSKS' region element; that stretch reads KMSKS. Residue Lys-554 coordinates ATP.

The protein belongs to the class-I aminoacyl-tRNA synthetase family. ValS type 2 subfamily. In terms of assembly, monomer.

It is found in the cytoplasm. It catalyses the reaction tRNA(Val) + L-valine + ATP = L-valyl-tRNA(Val) + AMP + diphosphate. In terms of biological role, catalyzes the attachment of valine to tRNA(Val). As ValRS can inadvertently accommodate and process structurally similar amino acids such as threonine, to avoid such errors, it has a 'posttransfer' editing activity that hydrolyzes mischarged Thr-tRNA(Val) in a tRNA-dependent manner. This is Valine--tRNA ligase from Orientia tsutsugamushi (strain Boryong) (Rickettsia tsutsugamushi).